Here is a 341-residue protein sequence, read N- to C-terminus: Glyceraldehyde-3-phosphate dehydrogenase 2 (341 aa).

Residues 13-14 (RI), D35, and R85 contribute to the NAD(+) site. D-glyceraldehyde 3-phosphate contacts are provided by residues 157–159 (SCT), T188, 217–218 (TG), and R240. C158 functions as the Nucleophile in the catalytic mechanism. Residue N322 coordinates NAD(+).

It belongs to the glyceraldehyde-3-phosphate dehydrogenase family. Homotetramer.

It localises to the cytoplasm. It carries out the reaction D-glyceraldehyde 3-phosphate + phosphate + NAD(+) = (2R)-3-phospho-glyceroyl phosphate + NADH + H(+). It functions in the pathway carbohydrate degradation; glycolysis; pyruvate from D-glyceraldehyde 3-phosphate: step 1/5. The chain is Glyceraldehyde-3-phosphate dehydrogenase 2 (gpd-2) from Caenorhabditis elegans.